Reading from the N-terminus, the 90-residue chain is Envelope glycoprotein N (90 aa).

Residues 1–21 (MTWKLFICFLSFGVIFLRVSS) form the signal peptide. At 22–55 (LTEKSHTTSYTILHNNNFYSNSCSADTYVPSIKT) the chain is on the virion surface side. The chain crosses the membrane as a helical span at residues 56 to 76 (FSSVWAILNVIIFFCASLFYL). The Intravirion segment spans residues 77–90 (RHLCIVKFISNLTK).

The protein belongs to the herpesviridae glycoprotein N family. As to quaternary structure, interacts (via N-terminus) with gM (via N-terminus). The gM-gN heterodimer forms the gCII complex.

It localises to the virion membrane. Its subcellular location is the host membrane. The protein resides in the host Golgi apparatus. The protein localises to the host trans-Golgi network. Its function is as follows. Envelope glycoprotein necessary for proper maturation of gM and modulation of its membrane fusion activity. Also plays a critical role in virion morphogenesis. The chain is Envelope glycoprotein N from Saimiriine herpesvirus 2 (strain 11) (SaHV-2).